The following is a 258-amino-acid chain: tRNA pseudouridine synthase A (258 aa).

Asp-52 acts as the Nucleophile in catalysis. Tyr-110 contributes to the substrate binding site.

It belongs to the tRNA pseudouridine synthase TruA family. Homodimer.

It carries out the reaction uridine(38/39/40) in tRNA = pseudouridine(38/39/40) in tRNA. Its function is as follows. Formation of pseudouridine at positions 38, 39 and 40 in the anticodon stem and loop of transfer RNAs. In Francisella tularensis subsp. holarctica (strain FTNF002-00 / FTA), this protein is tRNA pseudouridine synthase A.